We begin with the raw amino-acid sequence, 139 residues long: 3-hydroxyacyl-[acyl-carrier-protein] dehydratase FabZ (139 aa).

Histidine 46 is a catalytic residue.

The protein belongs to the thioester dehydratase family. FabZ subfamily.

It localises to the cytoplasm. It carries out the reaction a (3R)-hydroxyacyl-[ACP] = a (2E)-enoyl-[ACP] + H2O. Its function is as follows. Involved in unsaturated fatty acids biosynthesis. Catalyzes the dehydration of short chain beta-hydroxyacyl-ACPs and long chain saturated and unsaturated beta-hydroxyacyl-ACPs. This chain is 3-hydroxyacyl-[acyl-carrier-protein] dehydratase FabZ, found in Streptococcus pyogenes serotype M3 (strain ATCC BAA-595 / MGAS315).